Reading from the N-terminus, the 246-residue chain is MNNNTTAPTYTLRGLQLIGWRDMQHALDYLFADGQLKQGTLVAINAEKMLTIEENAEVRELINAAEFKYADGISVVRSVRKKYPQAQVSRVAGADLWEELMARAGKEGTTVFLVGGKPEVLAQTEAKLRNQWNVNIVGSQDGYFKPEQRQALFERIHASGAQIVTVAMGSPKQEIFMRDCRLVHPDALYMGVGGTYDVFTGHVKRAPKIWQTLGLEWLYRLLSQPSRIKRQLRLLRYLRWHYTGNL.

This sequence belongs to the glycosyltransferase 26 family.

The enzyme catalyses UDP-N-acetyl-alpha-D-mannosaminouronate + N-acetyl-alpha-D-glucosaminyl-di-trans,octa-cis-undecaprenyl diphosphate = beta-D-ManNAcA-(1-&gt;4)-alpha-D-GlcNAc-di-trans,octa-cis-undecaprenyl diphosphate + UDP + H(+). The protein operates within bacterial outer membrane biogenesis; enterobacterial common antigen biosynthesis. In terms of biological role, catalyzes the synthesis of Und-PP-GlcNAc-ManNAcA (Lipid II), the second lipid-linked intermediate involved in enterobacterial common antigen (ECA) synthesis. In Escherichia coli O157:H7, this protein is UDP-N-acetyl-D-mannosaminuronic acid transferase.